The sequence spans 128 residues: Platelet basic protein (128 aa).

The first 34 residues, 1–34, serve as a signal peptide directing secretion; the sequence is MSLRLDTTPSCNSARPLHALQVLLLLSLLLTALA. 2 disulfides stabilise this stretch: C63–C89 and C65–C105.

This sequence belongs to the intercrine alpha (chemokine CxC) family. As to quaternary structure, beta-thromboglobulin is a homotetramer. In terms of processing, proteolytic removal of residues 1-9 produces the active peptide connective tissue-activating peptide III (CTAP-III) (low-affinity platelet factor IV (LA-PF4)). Post-translationally, proteolytic removal of residues 1-13 produces the active peptide beta-thromboglobulin, which is released from platelets along with platelet factor 4 and platelet-derived growth factor. NAP-2(1-66) is produced by proteolytical processing, probably after secretion by leukocytes other than neutrophils. In terms of processing, NAP-2(73) and NAP-2(74) seem not be produced by proteolytical processing of secreted precursors but are released in an active form from platelets.

The protein resides in the secreted. In terms of biological role, LA-PF4 stimulates DNA synthesis, mitosis, glycolysis, intracellular cAMP accumulation, prostaglandin E2 secretion, and synthesis of hyaluronic acid and sulfated glycosaminoglycan. It also stimulates the formation and secretion of plasminogen activator by human synovial cells. NAP-2 is a ligand for CXCR1 and CXCR2, and NAP-2, NAP-2(73), NAP-2(74), NAP-2(1-66), and most potent NAP-2(1-63) are chemoattractants and activators for neutrophils. TC-1 and TC-2 are antibacterial proteins, in vitro released from activated platelet alpha-granules. CTAP-III(1-81) is more potent than CTAP-III desensitize chemokine-induced neutrophil activation. The polypeptide is Platelet basic protein (PPBP) (Homo sapiens (Human)).